Here is a 373-residue protein sequence, read N- to C-terminus: Queuine tRNA-ribosyltransferase (373 aa).

The Proton acceptor role is filled by Asp-89. Substrate contacts are provided by residues 89–93, Asp-143, Gln-187, and Gly-214; that span reads DSGGF. An RNA binding region spans residues 245–251; the sequence is GVGKPED. Catalysis depends on Asp-264, which acts as the Nucleophile. Positions 269–273 are RNA binding; important for wobble base 34 recognition; that stretch reads TRNAR. Zn(2+) contacts are provided by Cys-302, Cys-304, Cys-307, and His-333.

This sequence belongs to the queuine tRNA-ribosyltransferase family. Homodimer. Within each dimer, one monomer is responsible for RNA recognition and catalysis, while the other monomer binds to the replacement base PreQ1. Zn(2+) serves as cofactor.

The enzyme catalyses 7-aminomethyl-7-carbaguanine + guanosine(34) in tRNA = 7-aminomethyl-7-carbaguanosine(34) in tRNA + guanine. It participates in tRNA modification; tRNA-queuosine biosynthesis. In terms of biological role, catalyzes the base-exchange of a guanine (G) residue with the queuine precursor 7-aminomethyl-7-deazaguanine (PreQ1) at position 34 (anticodon wobble position) in tRNAs with GU(N) anticodons (tRNA-Asp, -Asn, -His and -Tyr). Catalysis occurs through a double-displacement mechanism. The nucleophile active site attacks the C1' of nucleotide 34 to detach the guanine base from the RNA, forming a covalent enzyme-RNA intermediate. The proton acceptor active site deprotonates the incoming PreQ1, allowing a nucleophilic attack on the C1' of the ribose to form the product. After dissociation, two additional enzymatic reactions on the tRNA convert PreQ1 to queuine (Q), resulting in the hypermodified nucleoside queuosine (7-(((4,5-cis-dihydroxy-2-cyclopenten-1-yl)amino)methyl)-7-deazaguanosine). The sequence is that of Queuine tRNA-ribosyltransferase from Tolumonas auensis (strain DSM 9187 / NBRC 110442 / TA 4).